The sequence spans 693 residues: TGF-beta-activated kinase 1 and MAP3K7-binding protein 2 (693 aa).

Residues 8-51 (IDFQVLHDLRQKFPEVPEVVVSRCMLQNNNNLDACCAVLSQEST) form the CUE domain. Residues 91-130 (GREGSRMNGSRTLTHSISDGQLQGGQSNSELFQQEPQTAP) form a disordered region. The segment covering 97–130 (MNGSRTLTHSISDGQLQGGQSNSELFQQEPQTAP) has biased composition (polar residues). At arginine 173 the chain carries Asymmetric dimethylarginine. The tract at residues 219–310 (ITTPGGTTRQ…SGSSQSSAHS (92 aa)) is disordered. Over residues 220–231 (TTPGGTTRQTQQ) the composition is skewed to low complexity. The segment covering 232–282 (HSGWVSQFNPMNPQQVYQPSQPGPWTTCPASNPLSHTSSQQPNQQGHQTSH) has biased composition (polar residues). A compositionally biased stretch (low complexity) spans 286 to 310 (PISSPTTSQPPTIHSSGSSQSSAHS). Lysine 329 participates in a covalent cross-link: Glycyl lysine isopeptide (Lys-Gly) (interchain with G-Cter in SUMO). The segment at 330–381 (LEPPQRNNSSKLRSSGPRTSSTSSSVNSQTLNRNQPTVYIAASPPNTDELMS) is disordered. Positions 343 to 359 (SSGPRTSSTSSSVNSQT) are enriched in low complexity. A phosphoserine mark is found at serine 372, serine 450, serine 482, and serine 524. Residues 532–619 (YTQALLVHQK…TKEIDLFQAR (88 aa)) adopt a coiled-coil conformation. Lysine 562 participates in a covalent cross-link: Glycyl lysine isopeptide (Lys-Gly) (interchain with G-Cter in SUMO). Serine 582 is subject to Phosphoserine. Residue lysine 611 forms a Glycyl lysine isopeptide (Lys-Gly) (interchain with G-Cter in ubiquitin) linkage. The disordered stretch occupies residues 642 to 663 (PPKPKDQRSIIKTPKTQDTEDD). The RanBP2-type zinc finger occupies 663-693 (DEGAQWNCTACTFLNHPALIRCEQCEMPRHF). Cysteine 673 is subject to (Microbial infection) S-methylcysteine. The segment at 675 to 685 (FLNHPALIRCE) is interaction with polyubiquitin.

As to quaternary structure, interacts with MAP3K7 and TRAF6. Identified in the TRIKA2 complex composed of MAP3K7, TAB1 and TAB2. Binds 'Lys-63'-linked polyubiquitin chains. Interacts with NCOR1 and HDAC3 to form a ternary complex. Interacts (via C-terminal) with NUMBL (via PTB domain). Interacts (via the C-terminus) with DYNC2I2 (via WD domains). Interacts with RBCK1. Interacts with TRIM5. Interacts with TRIM38 (via B30.2/SPRY domain), leading to its translocation to lysosomes and degradation. Interacts with ASB1; this interaction promotes TAB2 stability. Degraded in a lysosome-dependent manner following interaction with TRIM38. In terms of processing, SUMOylated by TRIM60; leading to inhibition of MAPK/NF-kappaB activation and the innate immune response. Post-translationally, ubiquitinated; following IL1 stimulation or TRAF6 overexpression. Ubiquitination involves RBCK1 leading to proteasomal degradation. Ubiquitinated at Lys-611 by TRIM45 leading to proteasomal degradation. Phosphorylated. In terms of processing, (Microbial infection) Methylated at Cys-673 by enteropathogenic E.coli protein NleE or S.flexneri protein OspZ: methylation disrupts zinc-binding and ability to bind 'Lys-63'-linked ubiquitin, leading to NF-kappa-B inactivation. Widely expressed. In the embryo, expressed in the ventricular trabeculae, endothelial cells of the conotruncal cushions of the outflow tract and in the endothelial cells lining the developing aortic valves.

The protein resides in the membrane. It localises to the endosome membrane. Its subcellular location is the lysosome membrane. The protein localises to the cytoplasm. It is found in the cytosol. Adapter required to activate the JNK and NF-kappa-B signaling pathways through the specific recognition of 'Lys-63'-linked polyubiquitin chains by its RanBP2-type zinc finger (NZF). Acts as an adapter linking MAP3K7/TAK1 and TRAF6 to 'Lys-63'-linked polyubiquitin chains. The RanBP2-type zinc finger (NZF) specifically recognizes Lys-63'-linked polyubiquitin chains unanchored or anchored to the substrate proteins such as RIPK1/RIP1 and RIPK2: this acts as a scaffold to organize a large signaling complex to promote autophosphorylation of MAP3K7/TAK1, and subsequent activation of I-kappa-B-kinase (IKK) core complex by MAP3K7/TAK1. Also recognizes and binds Lys-63'-linked polyubiquitin chains of heterotypic 'Lys-63'-/'Lys-48'-linked branched ubiquitin chains. Regulates the IL1-mediated translocation of NCOR1 out of the nucleus. Involved in heart development. The protein is TGF-beta-activated kinase 1 and MAP3K7-binding protein 2 of Homo sapiens (Human).